Here is an 874-residue protein sequence, read N- to C-terminus: Alanine--tRNA ligase (874 aa).

Positions 562, 566, 665, and 669 each coordinate Zn(2+).

This sequence belongs to the class-II aminoacyl-tRNA synthetase family. Requires Zn(2+) as cofactor.

Its subcellular location is the cytoplasm. The enzyme catalyses tRNA(Ala) + L-alanine + ATP = L-alanyl-tRNA(Ala) + AMP + diphosphate. Functionally, catalyzes the attachment of alanine to tRNA(Ala) in a two-step reaction: alanine is first activated by ATP to form Ala-AMP and then transferred to the acceptor end of tRNA(Ala). Also edits incorrectly charged Ser-tRNA(Ala) and Gly-tRNA(Ala) via its editing domain. The chain is Alanine--tRNA ligase from Pseudomonas putida (strain GB-1).